A 359-amino-acid chain; its full sequence is Peptide chain release factor 1 (359 aa).

Q236 bears the N5-methylglutamine mark.

This sequence belongs to the prokaryotic/mitochondrial release factor family. Methylated by PrmC. Methylation increases the termination efficiency of RF1.

Its subcellular location is the cytoplasm. Functionally, peptide chain release factor 1 directs the termination of translation in response to the peptide chain termination codons UAG and UAA. The protein is Peptide chain release factor 1 of Streptococcus pyogenes serotype M3 (strain ATCC BAA-595 / MGAS315).